The sequence spans 199 residues: Twist-related protein (199 aa).

The segment at 1–43 is disordered; the sequence is MQEHQLSRVTSGNKKKYQSFDDESRDEKRMKCDSTDKLESNSN. A compositionally biased stretch (basic and acidic residues) spans 25 to 39; that stretch reads RDEKRMKCDSTDKLE. The region spanning 51 to 102 is the bHLH domain; sequence THRVIANIRERQRTQALNQSFSTLRKIIPTLPSDKLSKIQTLRLAAMYIDFL.

Efficient DNA binding requires dimerization with another bHLH protein. Homodimer. As to expression, expression is seen at the point of medusa formation in the ectodermal and endodermal bud tissues, and in the entocodon which gives rise to all smooth and striated muscle cells. After the subumbrellar plate differentiates from the endoderm, strong expression is detected until the medusa detaches from the gonzoid. Expression is observed in the distal part of the medusa but diminishes in entocodon-derived muscles as the tissues differentiate, with expression disappearing completely after stage 8. In later stages expression is seen in the distal and proximal parts of the bud and depending on state of maturity, in the developing gonadal tissue.

The protein localises to the nucleus. Functionally, probable transcription factor, which may be responsible for the formation of myoepithelial cells in early muscle development in larva and the formation of non-muscle tissues in later bud stages and mesoderm-like structures in the medusa. The polypeptide is Twist-related protein (Podocoryna carnea (Hydrozoan)).